Reading from the N-terminus, the 315-residue chain is Protein LST8 homolog (315 aa).

WD repeat units lie at residues 1–31, 33–71, 76–115, 119–158, 161–200, 211–250, 253–292, and 295–315; these read MGDQ…KTMR, VETS…TAPV, GVQK…PHCS, DCES…HECI, EVDA…DQKM, AHTR…KWRE, IENY…PTRE, and GHTK…KVNH.

It belongs to the WD repeat LST8 family.

It is found in the cytoplasm. The sequence is that of Protein LST8 homolog from Drosophila pseudoobscura pseudoobscura (Fruit fly).